Consider the following 105-residue polypeptide: Large ribosomal subunit protein eL36 (105 aa).

Position 62 is an N6-acetyllysine (Lys62).

The protein belongs to the eukaryotic ribosomal protein eL36 family. As to quaternary structure, component of the large ribosomal subunit.

Its subcellular location is the cytoplasm. It is found in the cytosol. Component of the large ribosomal subunit. The ribosome is a large ribonucleoprotein complex responsible for the synthesis of proteins in the cell. The protein is Large ribosomal subunit protein eL36 (Rpl36) of Rattus norvegicus (Rat).